A 132-amino-acid chain; its full sequence is MWNEFKKFAFKGNVIDLAVGVVIGAAFGKIVSSLVKDIITPLLGMVLGGVDFTGLKITFGKASIMYGKFIQTIFDFLIIAAAIFMFVKVFNKLTSKREEEKEEELPEPTKEEELLGEIRDLLKQQNSSKDRA.

The next 3 helical transmembrane spans lie at 14–34 (VIDLAVGVVIGAAFGKIVSSL), 38–58 (IITPLLGMVLGGVDFTGLKIT), and 69–89 (FIQTIFDFLIIAAAIFMFVKV).

This sequence belongs to the MscL family. As to quaternary structure, homopentamer.

Its subcellular location is the cell membrane. Channel that opens in response to stretch forces in the membrane lipid bilayer. May participate in the regulation of osmotic pressure changes within the cell. This chain is Large-conductance mechanosensitive channel, found in Bacillus thuringiensis (strain Al Hakam).